We begin with the raw amino-acid sequence, 114 residues long: Large ribosomal subunit protein bL19 (114 aa).

Belongs to the bacterial ribosomal protein bL19 family.

Its function is as follows. This protein is located at the 30S-50S ribosomal subunit interface and may play a role in the structure and function of the aminoacyl-tRNA binding site. The polypeptide is Large ribosomal subunit protein bL19 (Clostridium acetobutylicum (strain ATCC 824 / DSM 792 / JCM 1419 / IAM 19013 / LMG 5710 / NBRC 13948 / NRRL B-527 / VKM B-1787 / 2291 / W)).